The following is a 537-amino-acid chain: CTP synthase (537 aa).

The tract at residues 1–265 is amidoligase domain; it reads MTKFIFVTGG…GKYLVKRLGL (265 aa). A CTP-binding site is contributed by Ser-13. Residue Ser-13 coordinates UTP. An ATP-binding site is contributed by 14-19; it reads GLGKGI. Tyr-54 lines the L-glutamine pocket. Asp-71 is a binding site for ATP. Residues Asp-71 and Glu-139 each coordinate Mg(2+). CTP is bound by residues 146 to 148, 186 to 191, and Lys-222; these read DIE and KTKPTQ. UTP-binding positions include 186–191 and Lys-222; that span reads KTKPTQ. Residues 290–532 enclose the Glutamine amidotransferase type-1 domain; the sequence is EIAIVGKYVK…VKAAKEYKQE (243 aa). Residue Gly-351 coordinates L-glutamine. Cys-378 functions as the Nucleophile; for glutamine hydrolysis in the catalytic mechanism. Residues 379–382, Glu-402, and Arg-459 each bind L-glutamine; that span reads FGFQ. Catalysis depends on residues His-505 and Glu-507.

This sequence belongs to the CTP synthase family. In terms of assembly, homotetramer.

The enzyme catalyses UTP + L-glutamine + ATP + H2O = CTP + L-glutamate + ADP + phosphate + 2 H(+). It carries out the reaction L-glutamine + H2O = L-glutamate + NH4(+). The catalysed reaction is UTP + NH4(+) + ATP = CTP + ADP + phosphate + 2 H(+). The protein operates within pyrimidine metabolism; CTP biosynthesis via de novo pathway; CTP from UDP: step 2/2. Its activity is regulated as follows. Allosterically activated by GTP, when glutamine is the substrate; GTP has no effect on the reaction when ammonia is the substrate. The allosteric effector GTP functions by stabilizing the protein conformation that binds the tetrahedral intermediate(s) formed during glutamine hydrolysis. Inhibited by the product CTP, via allosteric rather than competitive inhibition. In terms of biological role, catalyzes the ATP-dependent amination of UTP to CTP with either L-glutamine or ammonia as the source of nitrogen. Regulates intracellular CTP levels through interactions with the four ribonucleotide triphosphates. The polypeptide is CTP synthase (Pyrococcus abyssi (strain GE5 / Orsay)).